A 351-amino-acid polypeptide reads, in one-letter code: Ceramide hydroxylase (351 aa).

4 helical membrane passes run 26 to 46 (AAIY…GFLI), 47 to 67 (AATT…MLAL), 141 to 161 (GFLF…AILI), and 204 to 224 (VACW…VVPV).

The protein belongs to the fatty acid desaturase type 1 family.

The protein resides in the cell inner membrane. The protein operates within lipid metabolism; sphingolipid metabolism. Involved in de novo bacterial ceramide synthesis. The polypeptide is Ceramide hydroxylase (Caulobacter vibrioides (strain NA1000 / CB15N) (Caulobacter crescentus)).